Consider the following 162-residue polypeptide: uncharacterized protein (162 aa).

An N-terminal signal peptide occupies residues 1 to 21 (MEGIMKKFFALMTLIAGISFS). The stretch at 32–118 (VIRESKFIAK…KKAELEKMVF (87 aa)) forms a coiled coil.

The protein belongs to the Skp family.

This is an uncharacterized protein from Aquifex aeolicus (strain VF5).